Here is a 1069-residue protein sequence, read N- to C-terminus: Leucine--tRNA ligase (1069 aa).

Positions 19-53 (TAEHGTGAANATASPSGAVPPSGATATAGTGDEPG) are disordered. Residues 107 to 118 (PYPSGTGLHVGH) carry the 'HIGH' region motif. Residues 823-836 (GRFTHHGAPVDRRS) show a composition bias toward basic and acidic residues. The tract at residues 823-846 (GRFTHHGAPVDRRSGKMGKSLKNS) is disordered. Positions 838-842 (KMGKS) match the 'KMSKS' region motif. Residue lysine 841 participates in ATP binding.

This sequence belongs to the class-I aminoacyl-tRNA synthetase family.

Its subcellular location is the cytoplasm. It carries out the reaction tRNA(Leu) + L-leucine + ATP = L-leucyl-tRNA(Leu) + AMP + diphosphate. The protein is Leucine--tRNA ligase of Frankia alni (strain DSM 45986 / CECT 9034 / ACN14a).